Here is a 244-residue protein sequence, read N- to C-terminus: MAAAAAAGEARRVLVYGGRGALGSRCVQAFRARNWWVASVDVVENEEASASIIVKMTDSFTEQADQVTAEVGKLLGEEKVDAILCVAGGWAGGNAKSKSLFKNCDLMWKQSIWTSTISSHLATKHLKEGGLLTLAGAKAALDGTPGMIGYGMAKGAVHQLCQSLAGKNSGMPPGAAAIAVLPVTLDTPMNRKSMPEADFSSWTPLEFLVETFHDWITGKNRPSSGSLIQVVTTEGRTELTPAYF.

Alanine 2 bears the N-acetylalanine mark. Position 14-38 (14-38 (LVYGGRGALGSRCVQAFRARNWWVA)) interacts with NADP(+). Residues lysine 73, lysine 79, lysine 96, and lysine 102 each carry the N6-succinyllysine modification. Catalysis depends on tyrosine 150, which acts as the Proton acceptor.

This sequence belongs to the short-chain dehydrogenases/reductases (SDR) family. In terms of assembly, homodimer.

It carries out the reaction 5,6,7,8-tetrahydropteridine + NAD(+) = 6,7-dihydropteridine + NADH + H(+). The enzyme catalyses 5,6,7,8-tetrahydropteridine + NADP(+) = 6,7-dihydropteridine + NADPH + H(+). In terms of biological role, catalyzes the conversion of quinonoid dihydrobiopterin into tetrahydrobiopterin. The polypeptide is Dihydropteridine reductase (QDPR) (Homo sapiens (Human)).